A 263-amino-acid chain; its full sequence is Pollen allergen Lol p 1 (263 aa).

Positions Met1 to Gly23 are cleaved as a signal peptide. N-linked (GlcNAc...) asparagine glycosylation is present at Asn32. The Expansin-like EG45 domain occupies Gly61–Asp167. Residues Asn181 to Ala262 form the Expansin-like CBD domain.

Belongs to the expansin family. Expansin B subfamily.

The protein localises to the secreted. This is Pollen allergen Lol p 1 from Lolium perenne (Perennial ryegrass).